Reading from the N-terminus, the 402-residue chain is Plasminogen activator inhibitor 1 (402 aa).

The N-terminal stretch at 1-23 (MRMSPVFACLALGLALIFGEGSA) is a signal peptide. N-linked (GlcNAc...) asparagine glycans are attached at residues asparagine 232, asparagine 288, and asparagine 352.

Belongs to the serpin family. Forms a heterodimer with TMPRSS7. Interacts with VTN. Binds LRP1B; binding is followed by internalization and degradation. Interacts with PPP1CB. In complex with PLAU/uPA, interacts with PLAUR/uPAR. Interacts with SORL1 and LRP1, either alone or in complex with PLAU; these interactions are abolished in the presence of LRPAP1/RAP. The ternary complex composed of PLAUR-PLAU-PAI1 also interacts with SORL1. Interacts with PLAT/tPA. Also interacts with SORL1, when complexed to PLAT/tPA. As to expression, vascular endothelial cells may be the primary site of synthesis of plasma PAI1.

The protein resides in the secreted. Serine protease inhibitor. Inhibits TMPRSS7. Is a primary inhibitor of tissue-type plasminogen activator (PLAT) and urokinase-type plasminogen activator (PLAU). As PLAT inhibitor, it is required for fibrinolysis down-regulation and is responsible for the controlled degradation of blood clots. As PLAU inhibitor, it is involved in the regulation of cell adhesion and spreading. Acts as a regulator of cell migration, independently of its role as protease inhibitor. It is required for stimulation of keratinocyte migration during cutaneous injury repair. It is involved in cellular and replicative senescence. Plays a role in alveolar type 2 cells senescence in the lung. Is involved in the regulation of cementogenic differentiation of periodontal ligament stem cells, and regulates odontoblast differentiation and dentin formation during odontogenesis. In Bos taurus (Bovine), this protein is Plasminogen activator inhibitor 1 (SERPINE1).